A 327-amino-acid chain; its full sequence is Small ribosomal subunit protein RACK1 (327 aa).

7 WD repeats span residues 13–44 (AHTD…IVWK), 61–91 (GHSH…RLWD), 103–133 (GHTK…KLWN), 148–180 (GHRD…KVWN), 192–222 (GHTG…LLWD), 233–262 (EANS…KIWD), and 293–323 (RKVI…RVWG).

The protein belongs to the WD repeat G protein beta family. Ribosomal protein RACK1 subfamily.

This is Small ribosomal subunit protein RACK1 (GB1) from Brassica napus (Rape).